A 401-amino-acid chain; its full sequence is Imidazolonepropionase (401 aa).

Fe(3+) contacts are provided by H66 and H68. The Zn(2+) site is built by H66 and H68. 4-imidazolone-5-propanoate is bound by residues R75, Y138, and H171. Residue Y138 coordinates N-formimidoyl-L-glutamate. H236 contributes to the Fe(3+) binding site. H236 serves as a coordination point for Zn(2+). Q239 is a 4-imidazolone-5-propanoate binding site. Position 311 (D311) interacts with Fe(3+). Residue D311 coordinates Zn(2+). 2 residues coordinate N-formimidoyl-L-glutamate: N313 and G315. Residue T316 coordinates 4-imidazolone-5-propanoate.

Belongs to the metallo-dependent hydrolases superfamily. HutI family. Zn(2+) is required as a cofactor. Requires Fe(3+) as cofactor.

It is found in the cytoplasm. It catalyses the reaction 4-imidazolone-5-propanoate + H2O = N-formimidoyl-L-glutamate. The protein operates within amino-acid degradation; L-histidine degradation into L-glutamate; N-formimidoyl-L-glutamate from L-histidine: step 3/3. In terms of biological role, catalyzes the hydrolytic cleavage of the carbon-nitrogen bond in imidazolone-5-propanoate to yield N-formimidoyl-L-glutamate. It is the third step in the universal histidine degradation pathway. The chain is Imidazolonepropionase from Pseudomonas savastanoi pv. phaseolicola (strain 1448A / Race 6) (Pseudomonas syringae pv. phaseolicola (strain 1448A / Race 6)).